The following is a 473-amino-acid chain: Dihydrolipoyl dehydrogenase (473 aa).

Residues 36–45 (ERYDKLGGVC), Lys-54, and Ala-117 contribute to the FAD site. Cys-45 and Cys-50 form a disulfide bridge. Residues 182 to 186 (GSGII), Asp-205, and 270 to 273 (AIGR) each bind NAD(+). FAD contacts are provided by Asp-313 and Ala-321. Catalysis depends on His-445, which acts as the Proton acceptor.

Belongs to the class-I pyridine nucleotide-disulfide oxidoreductase family. In terms of assembly, homodimer. FAD serves as cofactor.

It localises to the cytoplasm. The catalysed reaction is N(6)-[(R)-dihydrolipoyl]-L-lysyl-[protein] + NAD(+) = N(6)-[(R)-lipoyl]-L-lysyl-[protein] + NADH + H(+). In terms of biological role, lipoamide dehydrogenase is a component of the alpha-ketoacid dehydrogenase complexes. The sequence is that of Dihydrolipoyl dehydrogenase (lpdA) from Buchnera aphidicola subsp. Acyrthosiphon pisum (strain APS) (Acyrthosiphon pisum symbiotic bacterium).